An 863-amino-acid chain; its full sequence is Glycerol-3-phosphate acyltransferase (863 aa).

The segment at 1 to 29 is disordered; it reads MPKKNSPLLPKETTTTQSSVDTSGSSNLT. Residues 12–29 show a composition bias toward polar residues; it reads ETTTTQSSVDTSGSSNLT. The HXXXXD motif signature appears at 343–348; the sequence is SHRSHM.

The protein belongs to the GPAT/DAPAT family.

The protein localises to the cell inner membrane. The enzyme catalyses sn-glycerol 3-phosphate + an acyl-CoA = a 1-acyl-sn-glycero-3-phosphate + CoA. It functions in the pathway phospholipid metabolism; CDP-diacylglycerol biosynthesis; CDP-diacylglycerol from sn-glycerol 3-phosphate: step 1/3. This is Glycerol-3-phosphate acyltransferase from Xylella fastidiosa (strain M23).